Reading from the N-terminus, the 208-residue chain is MIAIKDAHFLTSSSQLFQCPASLTSEMVILGRSNVGKSSFINTLLGKNLAKSSATPGKTRLANFFSTTWEDKENALRATFNVIDLPGFGYAKVSKSLKKEWEGFLWELLSVRTSIKLFIHLVDARHLDLEIDKNAKENIQALLRPDQAYLSLFTKFDKLNKNEQHRLFLNAPKPFLINTTHFNALSSKYPTLEIVRQTLLKYLLTNPS.

Positions 23–205 (LTSEMVILGR…RQTLLKYLLT (183 aa)) constitute an EngB-type G domain. Residues 31–38 (GRSNVGKS), 57–61 (GKTRL), 84–87 (DLPG), 154–157 (TKFD), and 182–184 (FNA) contribute to the GTP site. Mg(2+) contacts are provided by S38 and T59.

Belongs to the TRAFAC class TrmE-Era-EngA-EngB-Septin-like GTPase superfamily. EngB GTPase family. The cofactor is Mg(2+).

Necessary for normal cell division and for the maintenance of normal septation. This is Probable GTP-binding protein EngB from Helicobacter pylori (strain P12).